Consider the following 281-residue polypeptide: Probable endonuclease 4 (281 aa).

Histidine 69, histidine 109, glutamate 145, aspartate 179, histidine 182, histidine 216, aspartate 229, histidine 231, and glutamate 261 together coordinate Zn(2+).

It belongs to the AP endonuclease 2 family. The cofactor is Zn(2+).

It carries out the reaction Endonucleolytic cleavage to 5'-phosphooligonucleotide end-products.. Functionally, endonuclease IV plays a role in DNA repair. It cleaves phosphodiester bonds at apurinic or apyrimidinic (AP) sites, generating a 3'-hydroxyl group and a 5'-terminal sugar phosphate. This Yersinia enterocolitica serotype O:8 / biotype 1B (strain NCTC 13174 / 8081) protein is Probable endonuclease 4.